Reading from the N-terminus, the 114-residue chain is FK506-binding protein 1 (114 aa).

In terms of domain architecture, PPIase FKBP-type spans 26 to 114; that stretch reads GDLVTIHYTG…IFEVELLKVN (89 aa).

It belongs to the FKBP-type PPIase family. FKBP1 subfamily.

The protein localises to the cytoplasm. The enzyme catalyses [protein]-peptidylproline (omega=180) = [protein]-peptidylproline (omega=0). Its activity is regulated as follows. Inhibited by both FK506 and rapamycin. PPIases accelerate the folding of proteins. It catalyzes the cis-trans isomerization of proline imidic peptide bonds in oligopeptides. The sequence is that of FK506-binding protein 1 (FPR1) from Eremothecium gossypii (strain ATCC 10895 / CBS 109.51 / FGSC 9923 / NRRL Y-1056) (Yeast).